Here is a 435-residue protein sequence, read N- to C-terminus: Type A flavoprotein fprA (435 aa).

Residues 48 to 228 (ANGTTYNAYA…PFRSFVAQVL (181 aa)) are zinc metallo-hydrolase. Fe cation is bound by residues histidine 98, glutamate 100, aspartate 102, histidine 167, aspartate 186, and histidine 243. Residues 276 to 415 (LLIFYVSAYR…EGRAFGRRLA (140 aa)) form the Flavodoxin-like domain.

It in the N-terminal section; belongs to the zinc metallo-hydrolase group 3 family. As to quaternary structure, homodimer. It depends on FMN as a cofactor. Requires Fe cation as cofactor.

Functionally, low-potential electron donor to a number of redox enzymes. The protein is Type A flavoprotein fprA (fprA) of Rhodobacter capsulatus (Rhodopseudomonas capsulata).